The sequence spans 176 residues: HTH-type transcriptional regulator DctR (176 aa).

Residues Val-109 to Tyr-174 form the HTH luxR-type domain. The H-T-H motif DNA-binding region spans Thr-133–His-152.

Functionally, may act as a transcriptional regulator of dctA. This Escherichia coli O6:H1 (strain CFT073 / ATCC 700928 / UPEC) protein is HTH-type transcriptional regulator DctR (dctR).